Here is a 129-residue protein sequence, read N- to C-terminus: Small ribosomal subunit protein uS11 (129 aa).

This sequence belongs to the universal ribosomal protein uS11 family. Part of the 30S ribosomal subunit. Interacts with proteins S7 and S18. Binds to IF-3.

Functionally, located on the platform of the 30S subunit, it bridges several disparate RNA helices of the 16S rRNA. Forms part of the Shine-Dalgarno cleft in the 70S ribosome. The protein is Small ribosomal subunit protein uS11 of Haemophilus ducreyi (strain 35000HP / ATCC 700724).